Here is a 659-residue protein sequence, read N- to C-terminus: 3-hydroxypropionyl-coenzyme A synthetase (659 aa).

Aspartate 525 is a catalytic residue. Position 616 is an N6-acetyllysine (lysine 616).

This sequence belongs to the ATP-dependent AMP-binding enzyme family.

The enzyme catalyses 3-hydroxypropanoate + ATP + CoA = 3-hydroxypropanoyl-CoA + AMP + diphosphate. In terms of biological role, plays a role in the autotrophic CO(2) fixation pathway. Activates 3-hydroxypropionate to its CoA ester. Can also activate propionate, and to a lesser extent acrylate, acetate and butyrate. The protein is 3-hydroxypropionyl-coenzyme A synthetase of Sulfurisphaera tokodaii (strain DSM 16993 / JCM 10545 / NBRC 100140 / 7) (Sulfolobus tokodaii).